The following is a 163-amino-acid chain: Ureidoglycolate lyase (163 aa).

It belongs to the ureidoglycolate lyase family. In terms of assembly, homodimer. The cofactor is Ni(2+).

It carries out the reaction (S)-ureidoglycolate = urea + glyoxylate. It functions in the pathway nitrogen metabolism; (S)-allantoin degradation. Its function is as follows. Catalyzes the catabolism of the allantoin degradation intermediate (S)-ureidoglycolate, generating urea and glyoxylate. Involved in the utilization of allantoin as nitrogen source. This chain is Ureidoglycolate lyase, found in Mesorhizobium japonicum (strain LMG 29417 / CECT 9101 / MAFF 303099) (Mesorhizobium loti (strain MAFF 303099)).